The following is a 466-amino-acid chain: Glutamate--tRNA ligase (466 aa).

The 'HIGH' region motif lies at 11–21 (PSPTGFIHLGN). The short motif at 243–247 (KMSKR) is the 'KMSKS' region element. Lysine 246 contributes to the ATP binding site.

This sequence belongs to the class-I aminoacyl-tRNA synthetase family. Glutamate--tRNA ligase type 1 subfamily. In terms of assembly, monomer.

The protein localises to the cytoplasm. It catalyses the reaction tRNA(Glu) + L-glutamate + ATP = L-glutamyl-tRNA(Glu) + AMP + diphosphate. Functionally, catalyzes the attachment of glutamate to tRNA(Glu) in a two-step reaction: glutamate is first activated by ATP to form Glu-AMP and then transferred to the acceptor end of tRNA(Glu). The polypeptide is Glutamate--tRNA ligase (Cupriavidus taiwanensis (strain DSM 17343 / BCRC 17206 / CCUG 44338 / CIP 107171 / LMG 19424 / R1) (Ralstonia taiwanensis (strain LMG 19424))).